The chain runs to 374 residues: CMP-N-acetylneuraminate-beta-1,4-galactoside alpha-2,3-sialyltransferase (374 aa).

The Cytoplasmic segment spans residues 1–8 (MGLLVFVR). Residues 9 to 28 (NLLLALCLFLVLGFLYYSAW) traverse the membrane as a helical; Signal-anchor for type II membrane protein segment. At 29–374 (KLHLLQWEDS…RVITDLSSGI (346 aa)) the chain is on the lumenal side. Residues asparagine 79 and asparagine 170 are each glycosylated (N-linked (GlcNAc...) asparagine). Cysteine 159 and cysteine 313 are oxidised to a cystine.

The protein belongs to the glycosyltransferase 29 family. In terms of tissue distribution, found in all tissues tested. High expression found in brain, liver, kidney, colon, heart and spleen.

It is found in the membrane. It localises to the golgi apparatus. The protein localises to the golgi stack membrane. The enzyme catalyses a beta-D-galactosyl-(1-&gt;4)-N-acetyl-beta-D-glucosaminyl derivative + CMP-N-acetyl-beta-neuraminate = an N-acetyl-alpha-neuraminyl-(2-&gt;3)-beta-D-galactosyl-(1-&gt;4)-N-acetyl-beta-D-glucosaminyl derivative + CMP + H(+). It participates in protein modification; protein glycosylation. Functionally, catalyzes the formation of the NeuAc-alpha-2,3-Gal-beta-1,4-GlcNAc-, NeuAc-alpha-2,3-Gal-beta-1,3-GlcNAc- and NeuAc-alpha-2,3-Gal-beta-1,3-GalNAc- sequences found in terminal carbohydrate groups of glycoproteins and glycolipids. The highest activity is toward Gal-beta-1,3-GlcNAc and the lowest toward Gal-beta-1,3-GalNAc. This Mus musculus (Mouse) protein is CMP-N-acetylneuraminate-beta-1,4-galactoside alpha-2,3-sialyltransferase (St3gal3).